Here is a 381-residue protein sequence, read N- to C-terminus: Queuine tRNA-ribosyltransferase (381 aa).

Asp-96 (proton acceptor) is an active-site residue. Residues 96-100 (DSGGF), Asp-150, Gln-193, and Gly-220 each bind substrate. Residues 251-257 (GVGSPDS) are RNA binding. Asp-270 acts as the Nucleophile in catalysis. The tract at residues 275 to 279 (TRIAR) is RNA binding; important for wobble base 34 recognition. Zn(2+)-binding residues include Cys-308, Cys-310, Cys-313, and His-339.

The protein belongs to the queuine tRNA-ribosyltransferase family. As to quaternary structure, homodimer. Within each dimer, one monomer is responsible for RNA recognition and catalysis, while the other monomer binds to the replacement base PreQ1. The cofactor is Zn(2+).

It catalyses the reaction 7-aminomethyl-7-carbaguanine + guanosine(34) in tRNA = 7-aminomethyl-7-carbaguanosine(34) in tRNA + guanine. It participates in tRNA modification; tRNA-queuosine biosynthesis. In terms of biological role, catalyzes the base-exchange of a guanine (G) residue with the queuine precursor 7-aminomethyl-7-deazaguanine (PreQ1) at position 34 (anticodon wobble position) in tRNAs with GU(N) anticodons (tRNA-Asp, -Asn, -His and -Tyr). Catalysis occurs through a double-displacement mechanism. The nucleophile active site attacks the C1' of nucleotide 34 to detach the guanine base from the RNA, forming a covalent enzyme-RNA intermediate. The proton acceptor active site deprotonates the incoming PreQ1, allowing a nucleophilic attack on the C1' of the ribose to form the product. After dissociation, two additional enzymatic reactions on the tRNA convert PreQ1 to queuine (Q), resulting in the hypermodified nucleoside queuosine (7-(((4,5-cis-dihydroxy-2-cyclopenten-1-yl)amino)methyl)-7-deazaguanosine). The chain is Queuine tRNA-ribosyltransferase from Bacillus pumilus (strain SAFR-032).